Reading from the N-terminus, the 382-residue chain is D-galactonate dehydratase (382 aa).

Residue D183 participates in Mg(2+) binding. The Proton donor role is filled by H185. Mg(2+) contacts are provided by E209 and E235. The active-site Proton acceptor is H285.

This sequence belongs to the mandelate racemase/muconate lactonizing enzyme family. GalD subfamily. Requires Mg(2+) as cofactor.

The enzyme catalyses D-galactonate = 2-dehydro-3-deoxy-D-galactonate + H2O. Its pathway is carbohydrate acid metabolism; D-galactonate degradation; D-glyceraldehyde 3-phosphate and pyruvate from D-galactonate: step 1/3. Catalyzes the dehydration of D-galactonate to 2-keto-3-deoxy-D-galactonate. This Cronobacter sakazakii (strain ATCC BAA-894) (Enterobacter sakazakii) protein is D-galactonate dehydratase.